We begin with the raw amino-acid sequence, 154 residues long: Nascent polypeptide-associated complex subunit beta (154 aa).

The NAC-A/B domain occupies 33 to 98 (EQDDTKLIEA…PQEKNVTQLI (66 aa)). The tract at residues 125–154 (APTELNAGAPAGGDEGIPDLIDGEKFDEVE) is disordered.

This sequence belongs to the NAC-beta family. Part of the nascent polypeptide-associated complex (NAC), consisting of EGD2 and EGD1. NAC associates with ribosomes via EGD1.

It is found in the cytoplasm. It localises to the nucleus. Component of the nascent polypeptide-associated complex (NAC), a dynamic component of the ribosomal exit tunnel, protecting the emerging polypeptides from interaction with other cytoplasmic proteins to ensure appropriate nascent protein targeting. The NAC complex also promotes mitochondrial protein import by enhancing productive ribosome interactions with the outer mitochondrial membrane and blocks the inappropriate interaction of ribosomes translating non-secretory nascent polypeptides with translocation sites in the membrane of the endoplasmic reticulum. EGD1 may act as a transcription factor that exert a negative effect on the expression of several genes that are transcribed by RNA polymerase II. This is Nascent polypeptide-associated complex subunit beta (EGD1) from Scheffersomyces stipitis (strain ATCC 58785 / CBS 6054 / NBRC 10063 / NRRL Y-11545) (Yeast).